The following is a 179-amino-acid chain: Cytochrome c-type biogenesis protein CcmE (179 aa).

Topologically, residues 1–8 (MNPRRKSR) are cytoplasmic. A helical; Signal-anchor for type II membrane protein transmembrane segment spans residues 9–29 (LTIILFVLLGVTIASSLVLYA). The Periplasmic segment spans residues 30–179 (LRQNIDLFYT…AVNSVEEGKK (150 aa)). Heme-binding residues include H131 and Y135. 2 stretches are compositionally biased toward basic and acidic residues: residues 138–148 (PDLSEKMEQVH) and 161–179 (ESDRDRLDKAVNSVEEGKK). The disordered stretch occupies residues 138 to 179 (PDLSEKMEQVHKPMGISNQDMQGESDRDRLDKAVNSVEEGKK).

Belongs to the CcmE/CycJ family.

The protein resides in the cell inner membrane. Functionally, heme chaperone required for the biogenesis of c-type cytochromes. Transiently binds heme delivered by CcmC and transfers the heme to apo-cytochromes in a process facilitated by CcmF and CcmH. In Mannheimia succiniciproducens (strain KCTC 0769BP / MBEL55E), this protein is Cytochrome c-type biogenesis protein CcmE.